The sequence spans 234 residues: Segregation and condensation protein A (234 aa).

It belongs to the ScpA family. As to quaternary structure, component of a cohesin-like complex composed of ScpA, ScpB and the Smc homodimer, in which ScpA and ScpB bind to the head domain of Smc. The presence of the three proteins is required for the association of the complex with DNA.

It is found in the cytoplasm. Participates in chromosomal partition during cell division. May act via the formation of a condensin-like complex containing Smc and ScpB that pull DNA away from mid-cell into both cell halves. The sequence is that of Segregation and condensation protein A from Streptococcus pyogenes serotype M12 (strain MGAS2096).